Here is a 331-residue protein sequence, read N- to C-terminus: Putative peptidyl-prolyl cis-trans isomerase RC0542 (331 aa).

Residues 33–54 (EQTASNNSSTDENQTSINNEPP) form a disordered region. One can recognise a PPIase FKBP-type domain in the interval 128–226 (GHVVTVFYQI…SNEVKIYDDE (99 aa)).

The catalysed reaction is [protein]-peptidylproline (omega=180) = [protein]-peptidylproline (omega=0). The sequence is that of Putative peptidyl-prolyl cis-trans isomerase RC0542 from Rickettsia conorii (strain ATCC VR-613 / Malish 7).